The sequence spans 469 residues: MDVENEQILNVNPADPDNLSDSLFSGDEENAGTEEIKNEINGNWISASSINEARINAKAKRRLRKNSSRDSGRGDSVSDSGSDALRSGLTVPTSPKGRLLDRRSRSGKGRGLPKKGGAGGKGVWGTPGQVYDVEEVDVKDPNYDDDQENCVYETVVLPLDERAFEKTLTPIIQEYFEHGDTNEVAEMLRDLNLGEMKSGVPVLAVSLALEGKASHREMTSKLLSDLCGTVMSTTDVEKSFDKLLKDLPELALDTPRAPQLVGQFIARAVGDGILCNTYIDSYKGTVDCVQARAALDKATVLLSMSKGGKRKDSVWGSGGGQQSVNHLVKEIDMLLKEYLLSGDISEAEHCLKELEVPHFHHELVYEAIIMVLESTGESTFKMILDLLKSLWKSSTITVDQMKRGYERIYNEIPDINLDVPHSYSVLERFVEECFQAGIISKQLRDLCPSRGRKRFVSEGDGGRLKPESY.

N-acetylmethionine is present on methionine 1. Disordered stretches follow at residues 1–38 and 58–128; these read MDVE…EIKN and KAKR…GTPG. Serine 25 is modified (phosphoserine). A Nuclear localization signal motif is present at residues 58-64; the sequence is KAKRRLR. Serine 67 carries the phosphoserine; by PKB and RPS6KB1 modification. Phosphoserine occurs at positions 68, 71, 76, 78, 80, and 94. The Phosphodegron signature appears at 70–76; sequence DSGRGDS. Over residues 74 to 83 the composition is skewed to low complexity; the sequence is GDSVSDSGSD. A compositionally biased stretch (gly residues) spans 114–125; the sequence is KKGGAGGKGVWG. Tyrosine 152 is modified (phosphotyrosine). An MI 1 domain is found at 163–284; that stretch reads AFEKTLTPII…CNTYIDSYKG (122 aa). Positions 241–250 match the Nuclear localization signal motif; the sequence is DKLLKDLPEL. A phosphoserine mark is found at serine 313 and serine 317. An MI 2 domain is found at 326–449; sequence HLVKEIDMLL…SKQLRDLCPS (124 aa). A Phosphoserine; by PKB modification is found at serine 457.

The protein belongs to the PDCD4 family. In terms of assembly, interacts (via MI domains) with EIF4A2. Interacts (via MI domains) with EIF4A1 (via N-terminal domain). Heterotrimer with EIF4A1; one molecule of PDCD4 binds two molecules of EIF4A1. Interacts with EIF4G1. May form a complex with EIF4A1 and EIF4G1. The interaction between PDCD4 and EIF4A1 interferes with the interaction between EIF4A1 and EIF4G. When phosphorylated, interacts with BTRC and FBXW11. In terms of processing, polyubiquitinated, leading to its proteasomal degradation. Rapidly degraded in response to mitogens. Phosphorylation of the phosphodegron promotes interaction with BTRC and proteasomal degradation. Post-translationally, phosphorylated at Ser-67 by RPS6KB1 in response to mitogens; phosphorylation promotes proteasomal degradation of PDCD4. As to expression, up-regulated in proliferative cells. Highly expressed in epithelial cells of the mammary gland. Reduced expression in lung cancer and colon carcinoma.

The protein localises to the nucleus. It is found in the cytoplasm. Its function is as follows. Inhibits translation initiation and cap-dependent translation. May excert its function by hindering the interaction between EIF4A1 and EIF4G. Inhibits the helicase activity of EIF4A. Modulates the activation of JUN kinase. Down-regulates the expression of MAP4K1, thus inhibiting events important in driving invasion, namely, MAPK85 activation and consequent JUN-dependent transcription. May play a role in apoptosis. Tumor suppressor. Inhibits tumor promoter-induced neoplastic transformation. Binds RNA. The sequence is that of Programmed cell death protein 4 (PDCD4) from Homo sapiens (Human).